A 455-amino-acid chain; its full sequence is MLSRSRCASRAFSRSLSAFQKGNCPLVRRSLPGISLCQGPGYPDSRKTVINSSNIFSVRFFRTTAVCKDDVITVKTPAFAESVTEGDVRWEKAVGDTVAEDEVVCEIETDKTSVQVPSPANGVIEALLVPDGGKVEGGTPLFTLRKTGAAPAKAKPAAAPAAAAPKAEPTVSAVPPPPAAPIPTQMPPVPSPSQPLTSKPVSAVKPTAAPPRAEAGAGVGLRSEHREKMNRMRQRIAQRLKEAQNTCAMLTTFNEIDMSNIQEMRARHKDAFLKKHNLKLGFMSAFVKASAFALQEQPVVNAVIDDATKEVVYRDYIDISVAVATPRGLVVPVIRNVETMNYADIERTISELGEKARKNELAIEDMDGGTFTISNGGVFGSLFGTPIINPPQSAILGMHAIVDRPVVIGGKVEVRPMMYVALTYDHRLIDGREAVTFLRKIKAAVEDPRVLLLDL.

Residues 1–68 (MLSRSRCASR…RFFRTTAVCK (68 aa)) constitute a mitochondrion transit peptide. The Lipoyl-binding domain occupies 71–145 (VITVKTPAFA…EGGTPLFTLR (75 aa)). Ser-82 carries the post-translational modification Phosphoserine. Lys-111 is subject to N6-lipoyllysine. An N6-acetyllysine modification is found at Lys-155. Residues 155–173 (KPAAAPAAAAPKAEPTVSA) show a composition bias toward low complexity. A disordered region spans residues 155–220 (KPAAAPAAAA…PRAEAGAGVG (66 aa)). Pro residues predominate over residues 174 to 193 (VPPPPAAPIPTQMPPVPSPS). Residues Lys-269, Lys-274, Lys-275, Lys-279, and Lys-309 each carry the N6-acetyllysine modification. Active-site residues include His-426 and Asp-430.

It belongs to the 2-oxoacid dehydrogenase family. As to quaternary structure, the 2-oxoglutarate dehydrogenase complex is composed of OGDH (2-oxoglutarate dehydrogenase; E1), DLST (dihydrolipoamide succinyltransferase; E2), DLD (dihydrolipoamide dehydrogenase; E3) and the assembly factor KGD4. It contains multiple copies of the three enzymatic components (E1, E2 and E3). In the nucleus, the 2-oxoglutarate dehydrogenase complex associates with KAT2A. Interacts with ABHD11; this interaction maintains the functional lipoylation of the 2-oxoglutarate dehydrogenase complex. The cofactor is (R)-lipoate.

It is found in the mitochondrion matrix. Its subcellular location is the nucleus. The catalysed reaction is N(6)-[(R)-dihydrolipoyl]-L-lysyl-[protein] + succinyl-CoA = N(6)-[(R)-S(8)-succinyldihydrolipoyl]-L-lysyl-[protein] + CoA. It participates in amino-acid degradation; L-lysine degradation via saccharopine pathway; glutaryl-CoA from L-lysine: step 6/6. It functions in the pathway carbohydrate metabolism; tricarboxylic acid cycle. Functionally, dihydrolipoamide succinyltransferase (E2) component of the 2-oxoglutarate dehydrogenase complex. The 2-oxoglutarate dehydrogenase complex catalyzes the overall conversion of 2-oxoglutarate to succinyl-CoA and CO(2). The 2-oxoglutarate dehydrogenase complex is mainly active in the mitochondrion. A fraction of the 2-oxoglutarate dehydrogenase complex also localizes in the nucleus and is required for lysine succinylation of histones: associates with KAT2A on chromatin and provides succinyl-CoA to histone succinyltransferase KAT2A. The protein is Dihydrolipoyllysine-residue succinyltransferase component of 2-oxoglutarate dehydrogenase complex, mitochondrial of Bos taurus (Bovine).